A 402-amino-acid chain; its full sequence is Tryptophan synthase beta chain (402 aa).

Lys-88 bears the N6-(pyridoxal phosphate)lysine mark.

The protein belongs to the TrpB family. In terms of assembly, tetramer of two alpha and two beta chains. The cofactor is pyridoxal 5'-phosphate.

It catalyses the reaction (1S,2R)-1-C-(indol-3-yl)glycerol 3-phosphate + L-serine = D-glyceraldehyde 3-phosphate + L-tryptophan + H2O. The protein operates within amino-acid biosynthesis; L-tryptophan biosynthesis; L-tryptophan from chorismate: step 5/5. Its function is as follows. The beta subunit is responsible for the synthesis of L-tryptophan from indole and L-serine. This is Tryptophan synthase beta chain (trpB) from Pasteurella multocida (strain Pm70).